Reading from the N-terminus, the 133-residue chain is Small ribosomal subunit protein uS8 (133 aa).

It belongs to the universal ribosomal protein uS8 family. Part of the 30S ribosomal subunit. Contacts proteins S5 and S12.

Its function is as follows. One of the primary rRNA binding proteins, it binds directly to 16S rRNA central domain where it helps coordinate assembly of the platform of the 30S subunit. The polypeptide is Small ribosomal subunit protein uS8 (Prochlorococcus marinus (strain MIT 9215)).